Reading from the N-terminus, the 420-residue chain is 3-phosphoshikimate 1-carboxyvinyltransferase (420 aa).

Residues K20, S21, and R25 each contribute to the 3-phosphoshikimate site. K20 provides a ligand contact to phosphoenolpyruvate. R119 is a phosphoenolpyruvate binding site. Residues S161, S162, Q163, S189, D303, Q326, and K330 each contribute to the 3-phosphoshikimate site. Q163 lines the phosphoenolpyruvate pocket. The Proton acceptor role is filled by D303. Phosphoenolpyruvate is bound by residues R334, R375, and K400.

Belongs to the EPSP synthase family. As to quaternary structure, monomer.

Its subcellular location is the cytoplasm. It catalyses the reaction 3-phosphoshikimate + phosphoenolpyruvate = 5-O-(1-carboxyvinyl)-3-phosphoshikimate + phosphate. It functions in the pathway metabolic intermediate biosynthesis; chorismate biosynthesis; chorismate from D-erythrose 4-phosphate and phosphoenolpyruvate: step 6/7. Its function is as follows. Catalyzes the transfer of the enolpyruvyl moiety of phosphoenolpyruvate (PEP) to the 5-hydroxyl of shikimate-3-phosphate (S3P) to produce enolpyruvyl shikimate-3-phosphate and inorganic phosphate. The chain is 3-phosphoshikimate 1-carboxyvinyltransferase from Dehalococcoides mccartyi (strain ATCC BAA-2100 / JCM 16839 / KCTC 5957 / BAV1).